The chain runs to 135 residues: Transcription antitermination protein NusB (135 aa).

The protein belongs to the NusB family.

Functionally, involved in transcription antitermination. Required for transcription of ribosomal RNA (rRNA) genes. Binds specifically to the boxA antiterminator sequence of the ribosomal RNA (rrn) operons. The chain is Transcription antitermination protein NusB from Shewanella pealeana (strain ATCC 700345 / ANG-SQ1).